We begin with the raw amino-acid sequence, 253 residues long: tRNA pseudouridine synthase A (253 aa).

The Nucleophile role is filled by aspartate 53. Tyrosine 111 contributes to the substrate binding site.

It belongs to the tRNA pseudouridine synthase TruA family. In terms of assembly, homodimer.

The enzyme catalyses uridine(38/39/40) in tRNA = pseudouridine(38/39/40) in tRNA. In terms of biological role, formation of pseudouridine at positions 38, 39 and 40 in the anticodon stem and loop of transfer RNAs. The protein is tRNA pseudouridine synthase A of Oceanobacillus iheyensis (strain DSM 14371 / CIP 107618 / JCM 11309 / KCTC 3954 / HTE831).